A 226-amino-acid chain; its full sequence is NAD(P)H-hydrate epimerase (226 aa).

One can recognise a YjeF N-terminal domain in the interval 10–215 (AIELDLDLFE…ALQRKYQLNL (206 aa)). A (6S)-NADPHX-binding site is contributed by 58–62 (NNGGD). Residues Asn59 and Asp123 each coordinate K(+). Residues 127 to 133 (GFGFKPP) and Asp156 contribute to the (6S)-NADPHX site. Residue Ser159 participates in K(+) binding.

Belongs to the NnrE/AIBP family. It depends on K(+) as a cofactor.

The enzyme catalyses (6R)-NADHX = (6S)-NADHX. The catalysed reaction is (6R)-NADPHX = (6S)-NADPHX. Functionally, catalyzes the epimerization of the S- and R-forms of NAD(P)HX, a damaged form of NAD(P)H that is a result of enzymatic or heat-dependent hydration. This is a prerequisite for the S-specific NAD(P)H-hydrate dehydratase to allow the repair of both epimers of NAD(P)HX. This Drosophila persimilis (Fruit fly) protein is NAD(P)H-hydrate epimerase.